Consider the following 310-residue polypeptide: Aminoacyl tRNA synthase complex-interacting multifunctional protein 1 (310 aa).

Ala-2 is subject to N-acetylalanine. A required for fibroblast proliferation region spans residues 6-46; sequence AVLKRLEQKGAEADQIIEYLKQQVALLKEKAILQATMREEK. The segment at 54-192 is interaction with HSP90B1; sequence KLKKEIEELK…APRTVVSGLV (139 aa). Positions 92 to 110 are enriched in polar residues; the sequence is ASESVVQSPSVATTASPAT. The segment at 92–147 is disordered; the sequence is ASESVVQSPSVATTASPATKEQIKAGEEKKVKEKTEKKGEKKEKQQSAAASTDSKP. The tract at residues 101–115 is required for endothelial cell death; sequence SVATTASPATKEQIK. The span at 112 to 136 shows a compositional bias: basic and acidic residues; sequence EQIKAGEEKKVKEKTEKKGEKKEKQ. The required for endothelial cell migration stretch occupies residues 115–190; sequence KAGEEKKVKE…EAAPRTVVSG (76 aa). Residue Ser-138 is modified to Phosphoserine. One can recognise a tRNA-binding domain in the interval 149-250; sequence DASRLDLRIG…NGSVPGDRIT (102 aa). An N6-succinyllysine modification is found at Lys-267.

Homodimer. Part of the multisynthetase complex (MSC), a multisubunit complex that groups tRNA ligases for Arg (RARS1), Asp (DARS1), Gln (QARS1), Ile (IARS1), Leu (LARS1), Lys (KARS1), Met (MARS1) the bifunctional ligase for Glu and Pro (EPRS1) and the auxiliary subunits AIMP1/p43, AIMP2/p38 and EEF1E1/p18. Interacts (via N-terminus) with RARS1 (via N-terminus). Part of a complex composed of RARS1, QARS1 and AIMP1. Interacts (via C-terminus) with SMURF2. Interacts (via N-terminus) with HSP90B1/gp96 (via C-terminus). Interacts with PSMA7. Interacts with TARS3. Cleaved by caspase-7 in response to apoptosis to produce EMAP-II. Highly expressed in salivary glands and pancreatic alpha cells in the adult (at protein level). In the embryo, expressed primarily at sites of tissue remodeling such as ganglia, developing bones and teeth.

It localises to the nucleus. Its subcellular location is the cytoplasm. It is found in the cytosol. The protein resides in the secreted. The protein localises to the endoplasmic reticulum. It localises to the golgi apparatus. In terms of biological role, non-catalytic component of the multisynthase complex. Stimulates the catalytic activity of cytoplasmic arginyl-tRNA synthase. Binds tRNA. Possesses inflammatory cytokine activity. Negatively regulates TGF-beta signaling through stabilization of SMURF2 by binding to SMURF2 and inhibiting its SMAD7-mediated degradation. Involved in glucose homeostasis through induction of glucagon secretion at low glucose levels. Promotes dermal fibroblast proliferation and wound repair. Regulates KDELR1-mediated retention of HSP90B1/gp96 in the endoplasmic reticulum. Plays a role in angiogenesis by inducing endothelial cell migration at low concentrations and endothelian cell apoptosis at high concentrations. Induces maturation of dendritic cells and monocyte cell adhesion. Modulates endothelial cell responses by degrading HIF-1A through interaction with PSMA7. This chain is Aminoacyl tRNA synthase complex-interacting multifunctional protein 1 (Aimp1), found in Mus musculus (Mouse).